Reading from the N-terminus, the 277-residue chain is Diaminopimelate epimerase (277 aa).

Substrate is bound by residues Asn13, Gln46, and Asn66. Cys75 functions as the Proton donor in the catalytic mechanism. Substrate-binding positions include 76–77 (GN), Asn160, Asn193, and 211–212 (ER). Cys220 (proton acceptor) is an active-site residue. 221-222 (GS) contacts substrate.

This sequence belongs to the diaminopimelate epimerase family. Homodimer.

Its subcellular location is the cytoplasm. The catalysed reaction is (2S,6S)-2,6-diaminopimelate = meso-2,6-diaminopimelate. It functions in the pathway amino-acid biosynthesis; L-lysine biosynthesis via DAP pathway; DL-2,6-diaminopimelate from LL-2,6-diaminopimelate: step 1/1. In terms of biological role, catalyzes the stereoinversion of LL-2,6-diaminopimelate (L,L-DAP) to meso-diaminopimelate (meso-DAP), a precursor of L-lysine and an essential component of the bacterial peptidoglycan. In Legionella pneumophila (strain Corby), this protein is Diaminopimelate epimerase.